Reading from the N-terminus, the 245-residue chain is Protein crossbronx (245 aa).

The UBC core domain maps to 20–177 (QQEYKILAEY…VQESIVESKS (158 aa)).

The protein belongs to the ubiquitin-conjugating enzyme family. FTS subfamily.

The polypeptide is Protein crossbronx (cbx) (Drosophila virilis (Fruit fly)).